Consider the following 480-residue polypeptide: Salicylate hydroxylase asL1 (480 aa).

The chain crosses the membrane as a helical span at residues 17–37 (PMEIAIVGGGIVGVILAIGLT). FAD contacts are provided by Glu-47 and Ala-60. A glycan (N-linked (GlcNAc...) asparagine) is linked at Asn-87. Arg-131 lines the FAD pocket. A glycan (N-linked (GlcNAc...) asparagine) is linked at Asn-168. Residues Arg-213 and Tyr-246 contribute to the active site. The N-linked (GlcNAc...) asparagine glycan is linked to Asn-250. Residues Asp-329 and Ala-342 each contribute to the FAD site. Residues Asn-400 and Asn-464 are each glycosylated (N-linked (GlcNAc...) asparagine).

The protein belongs to the paxM FAD-dependent monooxygenase family. The cofactor is FAD.

It localises to the membrane. It functions in the pathway secondary metabolite biosynthesis; terpenoid biosynthesis. Salicylate hydroxylase; part of the gene cluster that mediates the biosynthesis of xenovulene A, an unusual meroterpenoid that has potent inhibitory effects on the human gamma-aminobutyrate A (GABAA) benzodiazepine receptor. The first step of xenovulene A biosynthesis is the biosynthesis of 3-methylorcinaldehyde performed by the non-reducing polyketide synthase aspks1. The salicylate hydroxylase asL1 then catalyzes the oxidative dearomatization of 3-methylorcinaldehyde to yield a dearomatized hydroxycyclohexadione. The 2-oxoglutarate-dependent dioxygenase asL3 further catalyzes the oxidative ring expansion to provide the first tropolone metabolite. The cytochrome P450 monooxygenase asR2 allows the synthesis of tropolone hemiacetal. In parallel, a previously unrecognised class of terpene cyclase, asR6, produces alpha-humulene from farnesylpyrophosphate (FPP). The putative Diels-Alderase asR5 probably catalyzes the formation of the tropolone-humulene skeleton by linking humulene and the polyketide moiety. Oxidative-ring contractions catalyzed by asL4 and asL6 then processively remove carbon atoms from the polyketide to yield xenovulene A. In Sarocladium schorii (Acremonium strictum (strain IMI 501407)), this protein is Salicylate hydroxylase asL1.